The following is a 196-amino-acid chain: Hibernation-associated plasma protein HP-20 (196 aa).

The N-terminal stretch at 1-23 (MTDVWRLAIFVLMVNVLNDQVSC) is a signal peptide. The Collagen-like domain maps to 25–63 (GPPGPVGYPGVPGVPGPRGPPGQPGAAGRPGDPGPKGPS). Over residues 28–47 (GPVGYPGVPGVPGPRGPPGQ) the composition is skewed to pro residues. The tract at residues 28-64 (GPVGYPGVPGVPGPRGPPGQPGAAGRPGDPGPKGPSV) is disordered. A C1q domain is found at 67–196 (PCRERSAFTV…IYFSGFLISS (130 aa)).

Plasma; synthesized in the liver.

The protein resides in the secreted. Its function is as follows. Plasma proteins HP-20, HP-25, HP-27 and HP-55 form a 140 kDa complex via disulfide bonds in the plasma and are hibernation specific. The protein is Hibernation-associated plasma protein HP-20 of Tamias sibiricus (Siberian chipmunk).